The following is a 204-amino-acid chain: MRWFKLWSILLVGSLLVSGTRGKLPDAPEFEKDLLIQRLNWMLWVIDECFRDLCYRTGICKGILEPAAIFHLKLPAINDTDHCGLIGFNETSCLKKLADGFFEFEVLFKFLTTEFGKSVINVDVMELLTKTLGWDIQEELNKLTKTHYSPPKFDRGLLGRLQGLKYWVRHFASFYVLSAMEKFAGQAVRVLNSIPDVTPDVHDK.

An N-terminal signal peptide occupies residues 1 to 22 (MRWFKLWSILLVGSLLVSGTRG).

It belongs to the IL-6 superfamily. As to quaternary structure, interacts with host IL6ST.

Initiates signal transduction through binding to interleukin-6 receptor subunit beta IL6ST, independently of the cognate IL6 receptor IL6R. In infected primary effusion lymphoma cells, promotes proliferation of cells, protects them from apoptosis, and promotes immune evasion of interferon activity. Also drives blood to lymphatic endothelial cell differentiation. The polypeptide is Viral interleukin-6 homolog (K2) (Homo sapiens (Human)).